The following is a 167-amino-acid chain: Insertion element IS1 1 protein InsB (167 aa).

It belongs to the transposase 27 family.

Absolutely required for transposition of IS1. This chain is Insertion element IS1 1 protein InsB (insB1), found in Escherichia coli (strain K12).